We begin with the raw amino-acid sequence, 316 residues long: Glutathione synthetase (316 aa).

One can recognise an ATP-grasp domain in the interval 124–311 (NEKLAALLFP…IAGLLFDAIE (188 aa)). 151-208 (FVLAHGQAVLKPLDGMGGRSIFRSGTGDPNLNVILETLTDGGRKLTLAQRFIPDITAG) lines the ATP pocket. 2 residues coordinate Mg(2+): E282 and N284.

This sequence belongs to the prokaryotic GSH synthase family. It depends on Mg(2+) as a cofactor. Mn(2+) is required as a cofactor.

The catalysed reaction is gamma-L-glutamyl-L-cysteine + glycine + ATP = glutathione + ADP + phosphate + H(+). Its pathway is sulfur metabolism; glutathione biosynthesis; glutathione from L-cysteine and L-glutamate: step 2/2. The chain is Glutathione synthetase from Xanthomonas campestris pv. campestris (strain ATCC 33913 / DSM 3586 / NCPPB 528 / LMG 568 / P 25).